Here is a 303-residue protein sequence, read N- to C-terminus: Protein transport protein SEC13-2 (303 aa).

WD repeat units lie at residues 7–46, 53–95, 102–143, 149–202, 209–251, and 261–300; these read AHEGVIHHAALNYYGTRLATCSSDKTVKIFEINDVNNSSS, GHEG…GKMQ, VHSA…IAST, AHKF…ETYV, GHKD…KKND, and KFEQKLGSVSWSLSGNLLAVSDDDKNVTIWKESGDGKWEE.

This sequence belongs to the WD repeat SEC13 family. In terms of assembly, the COPII coat is composed of at least 5 proteins: the SEC23/24 complex, the SEC13/31 complex, and the protein SAR1. Component of the nuclear pore complex (NPC). NPC constitutes the exclusive means of nucleocytoplasmic transport. NPCs allow the passive diffusion of ions and small molecules and the active, nuclear transport receptor-mediated bidirectional transport of macromolecules such as proteins, RNAs, ribonucleoparticles (RNPs), and ribosomal subunits across the nuclear envelope. Due to its 8-fold rotational symmetry, all subunits are present with 8 copies or multiples thereof.

It is found in the cytoplasmic vesicle. Its subcellular location is the COPII-coated vesicle membrane. The protein resides in the endoplasmic reticulum membrane. The protein localises to the nucleus. It localises to the nuclear pore complex. In terms of biological role, component of the coat protein complex II (COPII) which promotes the formation of transport vesicles from the endoplasmic reticulum (ER). The coat has two main functions, the physical deformation of the endoplasmic reticulum membrane into vesicles and the selection of cargo molecules. It also functions as a component of the nuclear pore complex (NPC). NPC components, collectively referred to as nucleoporins (NUPs), can play the role of both NPC structural components and of docking or interaction partners for transiently associated nuclear transport factors. SEC13 is required for efficient mRNA export from the nucleus to the cytoplasm and for correct nuclear pore biogenesis and distribution. The chain is Protein transport protein SEC13-2 (SEC132) from Candida glabrata (strain ATCC 2001 / BCRC 20586 / JCM 3761 / NBRC 0622 / NRRL Y-65 / CBS 138) (Yeast).